We begin with the raw amino-acid sequence, 101 residues long: NAD(P)H-quinone oxidoreductase subunit 4L, chloroplastic (101 aa).

The next 3 membrane-spanning stretches (helical) occupy residues 2-22, 32-52, and 61-81; these read MLEH…YGLI, MCLE…SDLF, and IFSI…LAIV.

The protein belongs to the complex I subunit 4L family. As to quaternary structure, NDH is composed of at least 16 different subunits, 5 of which are encoded in the nucleus.

It is found in the plastid. The protein resides in the chloroplast thylakoid membrane. It catalyses the reaction a plastoquinone + NADH + (n+1) H(+)(in) = a plastoquinol + NAD(+) + n H(+)(out). The catalysed reaction is a plastoquinone + NADPH + (n+1) H(+)(in) = a plastoquinol + NADP(+) + n H(+)(out). In terms of biological role, NDH shuttles electrons from NAD(P)H:plastoquinone, via FMN and iron-sulfur (Fe-S) centers, to quinones in the photosynthetic chain and possibly in a chloroplast respiratory chain. The immediate electron acceptor for the enzyme in this species is believed to be plastoquinone. Couples the redox reaction to proton translocation, and thus conserves the redox energy in a proton gradient. In Nandina domestica (Heavenly bamboo), this protein is NAD(P)H-quinone oxidoreductase subunit 4L, chloroplastic.